The chain runs to 89 residues: 10 kDa fusion protein (89 aa).

A disordered region spans residues 1-29 (MDENDGENLLTQPDDTGNSTNGVYAAGAP). Over residues 9–22 (LLTQPDDTGNSTNG) the composition is skewed to polar residues. N-linked (GlcNAc...) asparagine; by host glycosylation is present at asparagine 18.

This sequence belongs to the poxviruses fusion protein family. In terms of assembly, homotrimer, covalently linked.

The protein localises to the virion membrane. The sequence is that of 10 kDa fusion protein from Capra hircus (Goat).